A 507-amino-acid polypeptide reads, in one-letter code: Cobyric acid synthase (507 aa).

Residues 249–451 (DIEIAVINLP…IHGIFENREF (203 aa)) form the GATase cobBQ-type domain. The Nucleophile role is filled by Cys330. His443 is a catalytic residue.

The protein belongs to the CobB/CobQ family. CobQ subfamily.

It participates in cofactor biosynthesis; adenosylcobalamin biosynthesis. Catalyzes amidations at positions B, D, E, and G on adenosylcobyrinic A,C-diamide. NH(2) groups are provided by glutamine, and one molecule of ATP is hydrogenolyzed for each amidation. In Thermoanaerobacter sp. (strain X514), this protein is Cobyric acid synthase.